The sequence spans 479 residues: ATP synthase subunit beta (479 aa).

153 to 160 is an ATP binding site; that stretch reads GGAGVGKT.

The protein belongs to the ATPase alpha/beta chains family. As to quaternary structure, F-type ATPases have 2 components, CF(1) - the catalytic core - and CF(0) - the membrane proton channel. CF(1) has five subunits: alpha(3), beta(3), gamma(1), delta(1), epsilon(1). CF(0) has three main subunits: a(1), b(2) and c(9-12). The alpha and beta chains form an alternating ring which encloses part of the gamma chain. CF(1) is attached to CF(0) by a central stalk formed by the gamma and epsilon chains, while a peripheral stalk is formed by the delta and b chains.

It localises to the cell membrane. It carries out the reaction ATP + H2O + 4 H(+)(in) = ADP + phosphate + 5 H(+)(out). In terms of biological role, produces ATP from ADP in the presence of a proton gradient across the membrane. The catalytic sites are hosted primarily by the beta subunits. The polypeptide is ATP synthase subunit beta (Lactobacillus delbrueckii subsp. bulgaricus (strain ATCC 11842 / DSM 20081 / BCRC 10696 / JCM 1002 / NBRC 13953 / NCIMB 11778 / NCTC 12712 / WDCM 00102 / Lb 14)).